Reading from the N-terminus, the 486-residue chain is Probable FAD-binding monooxygenase ltbD (486 aa).

The segment at 186–243 (PAGDGGTNDQGPSRAQSTASSGGSGRPRSTESPQSGAQASTTPTSPPTTQSTGDDPAA) is disordered. Polar residues predominate over residues 194–206 (DQGPSRAQSTASS). Positions 220-241 (SGAQASTTPTSPPTTQSTGDDP) are enriched in low complexity.

Belongs to the FAD-binding monooxygenase family. Homodimer. FAD is required as a cofactor.

In terms of biological role, probable FAD-binding monooxygenase; part of the gene cluster that mediates the biosynthesis of luteodienoside A, a glycosylated polyketide consisting of an unusual 1-O-beta-D-glucopyranosyl-myo-inositol (glucinol) ester of 3-hydroxy-2,2,4-trimethylocta-4,6-dienoic acid. The HR-PKS ltbA produces the trimethylated polyketide chain from acetyl-CoA, malonyl-CoA and S-adenosylmethionine (SAM), and the ltbA cAT domain then uses glucinol produced by the glycosyltransferase ltbB as an offloading substrate to release luteodienoside A. Since ltbA and ltbB are sufficient for the biosynthesis of luteodienoside A, the functions of the methyltransferase ltbC and the FAD-binding monooxygenase ltbD within the pathway remain obscur. This Aspergillus luteorubrus protein is Probable FAD-binding monooxygenase ltbD.